The primary structure comprises 74 residues: MKVNVLLAVFLVVMVVTDHCHALFGLIPSMMGGLVSAFKGRRKLQMEARFQPQNKNYRKRELDLENLFTHMPDY.

A signal peptide spans Met-1–Ala-22. Residue Lys-39 is modified to Lysine amide. Residues Leu-44–Tyr-74 constitute a propeptide that is removed on maturation.

This sequence belongs to the non-disulfide-bridged peptide (NDBP) superfamily. Short antimicrobial peptide (group 4) family. As to expression, expressed by the venom gland.

Its subcellular location is the secreted. It is found in the target cell membrane. Cationic host defense peptide that have antibacterial activity by breaking membranes. Is more effective on Gram-positive than on Gram-negative bacteria. The protein is Antimicrobial peptide 36.4 of Lychas mucronatus (Chinese swimming scorpion).